A 59-amino-acid polypeptide reads, in one-letter code: Single-pass membrane and coiled-coil domain-containing protein 4 (59 aa).

Residues methionine 1–methionine 23 are disordered. The span at lysine 9–methionine 23 shows a compositional bias: basic and acidic residues. Residues lysine 9–valine 30 adopt a coiled-coil conformation. The chain crosses the membrane as a helical span at residues threonine 32–alanine 52.

The protein belongs to the SMCO4 family.

Its subcellular location is the membrane. The sequence is that of Single-pass membrane and coiled-coil domain-containing protein 4 (smco4) from Takifugu rubripes (Japanese pufferfish).